The primary structure comprises 608 residues: Amino-acid acetyltransferase, mitochondrial (608 aa).

Positions 402–604 constitute an N-acetyltransferase domain; it reads LNLITEHEKG…DICTRIEPSL (203 aa).

The protein belongs to the acetyltransferase family.

Its subcellular location is the mitochondrion. It catalyses the reaction L-glutamate + acetyl-CoA = N-acetyl-L-glutamate + CoA + H(+). The protein operates within amino-acid biosynthesis; L-arginine biosynthesis; N(2)-acetyl-L-ornithine from L-glutamate: step 1/4. N-acetylglutamate synthase involved in arginine biosynthesis. The protein is Amino-acid acetyltransferase, mitochondrial (ARG2) of Yarrowia lipolytica (strain CLIB 122 / E 150) (Yeast).